An 876-amino-acid polypeptide reads, in one-letter code: DDB1- and CUL4-associated factor 6 (876 aa).

5 WD repeats span residues Val-49–Thr-88, Gly-92–Arg-133, Cys-139–Lys-179, Asn-189–Thr-229, and Asn-251–Leu-290. 2 stretches are compositionally biased toward basic and acidic residues: residues Arg-288 to Arg-303 and Leu-312 to Glu-334. Disordered regions lie at residues Arg-288–Ser-340, Glu-355–Asn-391, Leu-408–Thr-485, Trp-498–Leu-645, and Glu-658–Asp-691. Ser-336 bears the Phosphoserine mark. Composition is skewed to polar residues over residues Thr-375 to Asn-391 and Gln-409 to Ala-422. Residues His-456–Ser-466 are compositionally biased toward basic and acidic residues. The segment covering Ser-499 to Ser-510 has biased composition (low complexity). Residues Ser-534 to Glu-544 show a composition bias toward basic and acidic residues. Polar residues-rich tracts occupy residues Glu-550–Leu-562, Asp-571–Ser-584, Glu-603–His-613, and Pro-621–Leu-645. Ser-665 carries the phosphoserine modification. Thr-670 is modified (phosphothreonine). The residue at position 673 (Ser-673) is a Phosphoserine. Positions Arg-692–Arg-721 constitute an IQ domain. 2 WD repeats span residues Asn-734–Leu-772 and Ala-775–Asn-814. A phosphoserine mark is found at Ser-863 and Ser-866.

Interacts with the nuclear receptors NR3C1 and AR in the presence of ligand. Interacts with DDB1, CUL4A and CUL4B.

The protein resides in the nucleus. The protein operates within protein modification; protein ubiquitination. Ligand-dependent coactivator of nuclear receptors. Enhance transcriptional activity of the nuclear receptors NR3C1 and AR. May function as a substrate receptor for CUL4-DDB1 E3 ubiquitin-protein ligase complex. This is DDB1- and CUL4-associated factor 6 (Dcaf6) from Mus musculus (Mouse).